Here is a 325-residue protein sequence, read N- to C-terminus: SAM pointed domain-containing Ets transcription factor (325 aa).

Disordered regions lie at residues 27–50 and 79–100; these read GTEKAASGAMGPEKQEWSPSPPAT and ARAGEDHPEEPEQCPVIDSQAS. The PNT domain occupies 119-203; it reads EVLKDIETAC…AHLDIWKSAA (85 aa). The ETS DNA-binding region spans 239 to 322; it reads IHLWQFLKEL…ISQRLVYQFV (84 aa).

The protein belongs to the ETS family. Interacts with the DNA-binding domain of the androgen receptor. Interacts with NKX3-1. As to expression, expressed in the accessory glands of sex organs including the prostate, seminal vesicle, coagulating gland in males, the oviduct in females, and in intestines. Expression is epithelial-specific.

It is found in the nucleus. Its function is as follows. May function as an androgen-independent transactivator of the prostate-specific antigen (PSA) promoter. Binds to 5'-GGAT-3' DNA sequences. May play a role in the regulation of the prostate gland and/or prostate cancer development. Acts as a transcriptional activator for SERPINB5 promoter. The polypeptide is SAM pointed domain-containing Ets transcription factor (Spdef) (Mus musculus (Mouse)).